The sequence spans 359 residues: Type-1 angiotensin II receptor (359 aa).

The Extracellular segment spans residues 1 to 25 (MILNSSTEDGIKRIQDDCPKAGRHN). N4 carries an N-linked (GlcNAc...) asparagine glycan. 2 residues coordinate angiotensin II: Q15 and D17. Disulfide bonds link C18/C274 and C101/C180. The helical transmembrane segment at 26–55 (YIFIMIPTLYSIIFVVGIFGNSLVVIVIYF) threads the bilayer. The Cytoplasmic segment spans residues 56–61 (YMKLKT). The helical transmembrane segment at 62-89 (VASVFLLNLALADLCFLLTLPLWAVYTA) threads the bilayer. Residues 90–98 (MEYRWPFGN) are Extracellular-facing. Residues 99–125 (YLCKIASASVSFNLYASVFLLTCLSID) form a helical membrane-spanning segment. Residues 126 to 141 (RYLAIVHPMKSRLRRT) lie on the Cytoplasmic side of the membrane. The helical transmembrane segment at 142–165 (MLVAKVTCIIIWLLAGLASLPTII) threads the bilayer. Residues 166–190 (HRNVFFIENTNITVCAFHYESQNST) lie on the Extracellular side of the membrane. R167 contributes to the angiotensin II binding site. N176 carries N-linked (GlcNAc...) asparagine glycosylation. Angiotensin II contacts are provided by F182, H183, and Y184. N-linked (GlcNAc...) asparagine glycosylation is present at N188. Residues 191 to 216 (LPVGLGLTKNILGFLFPFLIILTSYT) form a helical membrane-spanning segment. K199 serves as a coordination point for angiotensin II. At 217 to 239 (LIWKTLKKAYEIQKNKPRKDDIF) the chain is on the cytoplasmic side. A helical transmembrane segment spans residues 240–268 (KIILAIVLFFFFSWVPHQIFTFMDVLIQL). Residues 269–278 (GLIRDCKIED) lie on the Extracellular side of the membrane. A helical transmembrane segment spans residues 279-304 (IVDTAMPITICLAYFNNCLNPLFYGF). Over 305-359 (LGKKFKKYFLQLLKYIPPKAKSHSNLSTKMSTLSYRPSENGNSSTKKPAPCIEVE) the chain is Cytoplasmic. Over residues 336-350 (TLSYRPSENGNSSTK) the composition is skewed to polar residues. Residues 336–359 (TLSYRPSENGNSSTKKPAPCIEVE) form a disordered region. C355 carries the S-palmitoyl cysteine lipid modification.

This sequence belongs to the G-protein coupled receptor 1 family. Interacts with MAS1. Interacts with ARRB1. Interacts with FLNA (via filamin repeat 21); increases PKA-mediated phosphorylation of FLNA. In terms of processing, C-terminal Ser or Thr residues may be phosphorylated. In terms of tissue distribution, adrenal medulla, cortex and kidney.

It is found in the cell membrane. In terms of biological role, receptor for angiotensin II, a vasoconstricting peptide, which acts as a key regulator of blood pressure and sodium retention by the kidney. The activated receptor in turn couples to G-alpha proteins G(q) (GNAQ, GNA11, GNA14 or GNA15) and thus activates phospholipase C and increases the cytosolic Ca(2+) concentrations, which in turn triggers cellular responses such as stimulation of protein kinase C. The protein is Type-1 angiotensin II receptor (AGTR1) of Bos taurus (Bovine).